We begin with the raw amino-acid sequence, 1059 residues long: Isoleucine--tRNA ligase (1059 aa).

Positions 59–69 (PFANGLPHYGH) match the 'HIGH' region motif. The short motif at 637 to 641 (KMSKS) is the 'KMSKS' region element. Residue Lys-640 coordinates ATP.

The protein belongs to the class-I aminoacyl-tRNA synthetase family. IleS type 2 subfamily. As to quaternary structure, monomer. Zn(2+) is required as a cofactor.

The protein localises to the cytoplasm. It carries out the reaction tRNA(Ile) + L-isoleucine + ATP = L-isoleucyl-tRNA(Ile) + AMP + diphosphate. Its function is as follows. Catalyzes the attachment of isoleucine to tRNA(Ile). As IleRS can inadvertently accommodate and process structurally similar amino acids such as valine, to avoid such errors it has two additional distinct tRNA(Ile)-dependent editing activities. One activity is designated as 'pretransfer' editing and involves the hydrolysis of activated Val-AMP. The other activity is designated 'posttransfer' editing and involves deacylation of mischarged Val-tRNA(Ile). This chain is Isoleucine--tRNA ligase, found in Mycobacterium leprae (strain TN).